Reading from the N-terminus, the 196-residue chain is ATP-dependent Clp protease proteolytic subunit (196 aa).

The active-site Nucleophile is Ser-98. Residue His-123 is part of the active site.

The protein belongs to the peptidase S14 family. As to quaternary structure, fourteen ClpP subunits assemble into 2 heptameric rings which stack back to back to give a disk-like structure with a central cavity, resembling the structure of eukaryotic proteasomes.

It localises to the cytoplasm. It catalyses the reaction Hydrolysis of proteins to small peptides in the presence of ATP and magnesium. alpha-casein is the usual test substrate. In the absence of ATP, only oligopeptides shorter than five residues are hydrolyzed (such as succinyl-Leu-Tyr-|-NHMec, and Leu-Tyr-Leu-|-Tyr-Trp, in which cleavage of the -Tyr-|-Leu- and -Tyr-|-Trp bonds also occurs).. Functionally, cleaves peptides in various proteins in a process that requires ATP hydrolysis. Has a chymotrypsin-like activity. Plays a major role in the degradation of misfolded proteins. ClpXP is involved in the complete degradation of the Site-2 clipped anti-sigma-W factor RsiW. This results in the release of SigW and the transcription activation of the genes under the control of the sigma-W factor. The polypeptide is ATP-dependent Clp protease proteolytic subunit (Geobacillus kaustophilus (strain HTA426)).